The chain runs to 720 residues: Glutaryl-7-aminocephalosporanic-acid acylase (720 aa).

The N-terminal stretch at 1 to 29 is a signal peptide; that stretch reads MLRVLHRAASALVMATVIGLAPAVAFALA. Residues 190–198 constitute a propeptide, spacer peptide; sequence DPPDLADQG. Residue S199 is the Nucleophile of the active site. Catalysis depends on residues H221 and E653.

The protein belongs to the peptidase S45 family. Heterotetramer of two alpha and two beta subunits processed from the same precursor.

It localises to the periplasm. The enzyme catalyses (7R)-7-(4-carboxybutanamido)cephalosporanate + H2O = (7R)-7-aminocephalosporanate + glutarate. Catalyzes the deacylation of 7 beta-(4-carboxybutanamido)cephalosporanic acid (glutaryl-7-aminocephalosporanic acid or GL-7-ACA) to 7-aminocephalosporanic acid (7-ACA). The protein is Glutaryl-7-aminocephalosporanic-acid acylase of Pseudomonas sp. (strain SY-77).